The chain runs to 616 residues: Chaperone protein HscA (616 aa).

Belongs to the heat shock protein 70 family.

Functionally, chaperone involved in the maturation of iron-sulfur cluster-containing proteins. Has a low intrinsic ATPase activity which is markedly stimulated by HscB. Involved in the maturation of IscU. The chain is Chaperone protein HscA from Salmonella paratyphi C (strain RKS4594).